Consider the following 415-residue polypeptide: Probable peptidoglycan glycosyltransferase FtsW (415 aa).

Helical transmembrane passes span 31–51 (PILM…VTSA), 63–83 (FFFV…TVWL), 97–117 (LWIL…GIGH), 133–153 (IQVS…YIAT), 162–182 (ITGM…LLLQ), 185–205 (FGTT…ARAQ), 206–226 (WQMM…VVLS), 245–265 (FGHG…GVWG), 285–305 (FIFA…LIGL), 326–346 (IAGA…ALIN), and 361–381 (LPLM…LGFL).

Belongs to the SEDS family. FtsW subfamily.

The protein resides in the cell inner membrane. The catalysed reaction is [GlcNAc-(1-&gt;4)-Mur2Ac(oyl-L-Ala-gamma-D-Glu-L-Lys-D-Ala-D-Ala)](n)-di-trans,octa-cis-undecaprenyl diphosphate + beta-D-GlcNAc-(1-&gt;4)-Mur2Ac(oyl-L-Ala-gamma-D-Glu-L-Lys-D-Ala-D-Ala)-di-trans,octa-cis-undecaprenyl diphosphate = [GlcNAc-(1-&gt;4)-Mur2Ac(oyl-L-Ala-gamma-D-Glu-L-Lys-D-Ala-D-Ala)](n+1)-di-trans,octa-cis-undecaprenyl diphosphate + di-trans,octa-cis-undecaprenyl diphosphate + H(+). It participates in cell wall biogenesis; peptidoglycan biosynthesis. Peptidoglycan polymerase that is essential for cell division. The sequence is that of Probable peptidoglycan glycosyltransferase FtsW from Halothiobacillus neapolitanus (strain ATCC 23641 / c2) (Thiobacillus neapolitanus).